The chain runs to 358 residues: Peroxisome biogenesis protein 3-1 (358 aa).

A helical transmembrane segment spans residues 15-32 (ILVTTTCLGSGYLLYKLY). The stretch at 33-62 (NAHTRKLADLERELANERENDEIIKTQMKA) forms a coiled coil.

This sequence belongs to the peroxin-3 family.

It is found in the peroxisome membrane. Involved in morphology determination of peroxisomes, but not in import of peroxisomal matrix proteins. May act as a docking factor for PEX19 and be necessary for the import of peroxisomal membrane proteins in the peroxisomes. The chain is Peroxisome biogenesis protein 3-1 (PEX3-1) from Arabidopsis thaliana (Mouse-ear cress).